The primary structure comprises 218 residues: Tubulin polymerization-promoting protein (218 aa).

Positions 1-46 (MADSKAKPAKAANKTPPKSPGDPARAAKRLSLESEGANEGATAAPE) are disordered. Residues 1 to 115 (MADSKAKPAK…SCRTITFEQF (115 aa)) are mediates interaction with LIMK1. Threonine 15 is modified (phosphothreonine). Phosphoserine occurs at positions 19, 31, and 34. Threonine 42 is subject to Phosphothreonine. Residues histidine 60, histidine 71, cysteine 79, and cysteine 82 each coordinate Zn(2+). Phosphothreonine is present on threonine 91. Serine 106 carries the post-translational modification Phosphoserine. Serine 151 is a glycosylation site (O-linked (GlcNAc) serine). Phosphoserine occurs at positions 158 and 159. Residues 166–192 (TDTSKFTGSHKERFDQSGKGKGKAGRV) are disordered. The segment covering 174-183 (SHKERFDQSG) has biased composition (basic and acidic residues).

Belongs to the TPPP family. Homodimer. Binds tubulin; binding is inhibited by GTP. Interacts with MAPK1. Interacts with GAPDH; the interaction is direct. Interacts with LIMK1 (via the PDZ domain); the interaction is direct. Interacts with LIMK2. Interacts with HDAC6; thereby inhibiting the tubulin deacetylase activity of HDAC6. Interacts with aggregated SNCA; may have a pro-aggregatory role in synucleinopathies. Interacts with DYNLL1. Interacts (via C-terminus) with S100A2, S100A6 and S100B; these interactions inhibit TPPP dimerization. Mg(2+) serves as cofactor. Phosphorylated by LIMK1 on serine residues; phosphorylation may alter the tubulin polymerization activity. Phosphorylation by LIMK2, but not LIMK1, regulates astral microtubule organization at early stage of mitosis. Phosphorylation by ROCK1 at Ser-31, Ser-106 and Ser-158 inhibits interaction with HDAC6, resulting in decreased acetylation of tubulin, increased cell motility and entry into S-phase. Phosphorylation by CDK1 inhibits the microtubule polymerizing activity. Post-translationally, degraded by the proteasome; zinc-binding inhibits degradation by the proteasome. As to expression, widely expressed with higher expression in brain (at protein level).

The protein resides in the golgi outpost. Its subcellular location is the cytoplasm. The protein localises to the cytoskeleton. It is found in the microtubule organizing center. It localises to the nucleus. The protein resides in the spindle. The enzyme catalyses GTP + H2O = GDP + phosphate + H(+). Its function is as follows. Regulator of microtubule dynamics that plays a key role in myelination by promoting elongation of the myelin sheath. Acts as a microtubule nucleation factor in oligodendrocytes: specifically localizes to the postsynaptic Golgi apparatus region, also named Golgi outpost, and promotes microtubule nucleation, an important step for elongation of the myelin sheath. Required for both uniform polarized growth of distal microtubules as well as directing the branching of proximal processes. Shows magnesium-dependent GTPase activity; the role of the GTPase activity is unclear. In addition to microtubule nucleation activity, also involved in microtubule bundling and stabilization of existing microtubules, thereby maintaining the integrity of the microtubule network. Regulates microtubule dynamics by promoting tubulin acetylation: acts by inhibiting the tubulin deacetylase activity of HDAC6. Also regulates cell migration: phosphorylation by ROCK1 inhibits interaction with HDAC6, resulting in decreased acetylation of tubulin and increased cell motility. Plays a role in cell proliferation by regulating the G1/S-phase transition. Involved in astral microtubule organization and mitotic spindle orientation during early stage of mitosis; this process is regulated by phosphorylation by LIMK2. The polypeptide is Tubulin polymerization-promoting protein (Mus musculus (Mouse)).